A 136-amino-acid chain; its full sequence is Large ribosomal subunit protein bL21 (136 aa).

Low complexity predominate over residues 1–21 (MSETPSKAKASKPAESKAQAS). The segment at 1–25 (MSETPSKAKASKPAESKAQASDSSG) is disordered.

The protein belongs to the bacterial ribosomal protein bL21 family. In terms of assembly, part of the 50S ribosomal subunit. Contacts protein L20.

In terms of biological role, this protein binds to 23S rRNA in the presence of protein L20. The sequence is that of Large ribosomal subunit protein bL21 from Synechococcus sp. (strain RCC307).